The primary structure comprises 199 residues: Large ribosomal subunit protein bL9 (199 aa).

Positions 149 to 166 (AEAERINRGEDINSRQED) are enriched in basic and acidic residues. Residues 149-199 (AEAERINRGEDINSRQEDQDAAAEAIAAAGEFFDPEAQDETPETEAASEQQ) form a disordered region. Acidic residues predominate over residues 181-191 (FDPEAQDETPE).

It belongs to the bacterial ribosomal protein bL9 family.

Functionally, binds to the 23S rRNA. The polypeptide is Large ribosomal subunit protein bL9 (Afipia carboxidovorans (strain ATCC 49405 / DSM 1227 / KCTC 32145 / OM5) (Oligotropha carboxidovorans)).